The following is a 172-amino-acid chain: Bone marrow stromal antigen 2 (172 aa).

Residues 1-30 are Cytoplasmic-facing; sequence MAPSFYHYLPVPMDEMGGKQGWGSHRQWLG. A helical; Signal-anchor for type II membrane protein membrane pass occupies residues 31–51; the sequence is AAILVVLFGVTLVILTIYFAV. Residues 52–152 lie on the Extracellular side of the membrane; it reads TANSVACRDG…ETSSTVQVNS (101 aa). N-linked (GlcNAc...) asparagine glycosylation is present at asparagine 70. Positions 74-147 form a coiled coil; it reads LLQRQLTRTQ…LRIQKETSST (74 aa). Residue asparagine 94 is glycosylated (N-linked (GlcNAc...) asparagine; atypical). N-linked (GlcNAc...) asparagine glycosylation occurs at asparagine 97. Serine 152 carries the GPI-anchor amidated serine lipid modification. Positions 153–172 are cleaved as a propeptide — removed in mature form; sequence GSSMVVSSLLVLKVSLFLLF.

As to quaternary structure, parallel homodimer; disulfide-linked. May form homotetramers under reducing conditions. Isoform 1 and isoform 2 form homodimers and also heterodimers with each other. Dimerization is essential for its antiviral activity. Interacts (via cytoplasmic domain) with ARHGAP44. Interacts with MMP14 (via C-terminal cytoplasmic tail). Interacts with LILRA4/ILT7. Interacts with RNF115. In naive mice, specifically expressed on type I interferon-producing cells (at protein level).

The protein localises to the golgi apparatus. It is found in the trans-Golgi network. Its subcellular location is the cell membrane. The protein resides in the late endosome. It localises to the membrane raft. The protein localises to the cytoplasm. It is found in the apical cell membrane. Its function is as follows. IFN-induced antiviral host restriction factor which efficiently blocks the release of diverse mammalian enveloped viruses by directly tethering nascent virions to the membranes of infected cells. Acts as a direct physical tether, holding virions to the cell membrane and linking virions to each other. The tethered virions can be internalized by endocytosis and subsequently degraded or they can remain on the cell surface. In either case, their spread as cell-free virions is restricted. Its target viruses belong to diverse families, including retroviridae: human immunodeficiency virus type 1 (HIV-1), mouse mammary tumor virus (MMTV) and murine leukemia virus (MLV), filoviridae: ebola virus (EBOV), arenaviridae: lassa virus (LASV), and rhabdoviridae: vesicular stomatitis virus (VSV). Can inhibit cell surface proteolytic activity of MMP14 causing decreased activation of MMP15 which results in inhibition of cell growth and migration. Can stimulate signaling by LILRA4/ILT7 and consequently provide negative feedback to the production of IFN by plasmacytoid dendritic cells in response to viral infection. Plays a role in the organization of the subapical actin cytoskeleton in polarized epithelial cells. In Mus musculus (Mouse), this protein is Bone marrow stromal antigen 2 (Bst2).